Reading from the N-terminus, the 676-residue chain is tRNA 5-methylaminomethyl-2-thiouridine biosynthesis bifunctional protein MnmC (676 aa).

The tRNA (mnm(5)s(2)U34)-methyltransferase stretch occupies residues 1 to 241 (MFTVTPAKIY…KRECLCGIKN (241 aa)). Residues 268–676 (IGGGIASLFT…RKLLKGTEIK (409 aa)) are FAD-dependent cmnm(5)s(2)U34 oxidoreductase.

It in the N-terminal section; belongs to the methyltransferase superfamily. tRNA (mnm(5)s(2)U34)-methyltransferase family. This sequence in the C-terminal section; belongs to the DAO family. Requires FAD as cofactor.

The protein resides in the cytoplasm. The catalysed reaction is 5-aminomethyl-2-thiouridine(34) in tRNA + S-adenosyl-L-methionine = 5-methylaminomethyl-2-thiouridine(34) in tRNA + S-adenosyl-L-homocysteine + H(+). Catalyzes the last two steps in the biosynthesis of 5-methylaminomethyl-2-thiouridine (mnm(5)s(2)U) at the wobble position (U34) in tRNA. Catalyzes the FAD-dependent demodification of cmnm(5)s(2)U34 to nm(5)s(2)U34, followed by the transfer of a methyl group from S-adenosyl-L-methionine to nm(5)s(2)U34, to form mnm(5)s(2)U34. This is tRNA 5-methylaminomethyl-2-thiouridine biosynthesis bifunctional protein MnmC from Histophilus somni (strain 129Pt) (Haemophilus somnus).